Reading from the N-terminus, the 129-residue chain is Follitropin subunit beta (129 aa).

Positions 1–20 (MKSLQFCFLFCCWKAICCNS) are cleaved as a signal peptide. 6 disulfide bridges follow: cysteine 21–cysteine 69, cysteine 35–cysteine 84, cysteine 38–cysteine 122, cysteine 46–cysteine 100, cysteine 50–cysteine 102, and cysteine 105–cysteine 112. Residues asparagine 25 and asparagine 42 are each glycosylated (N-linked (GlcNAc...) asparagine).

This sequence belongs to the glycoprotein hormones subunit beta family. In terms of assembly, heterodimer. The active follitropin is a heterodimer composed of an alpha chain/CGA shared with other hormones and a unique beta chain/FSHB shown here.

It is found in the secreted. In terms of biological role, together with the alpha chain CGA constitutes follitropin, the follicle-stimulating hormone, and provides its biological specificity to the hormone heterodimer. Binds FSHR, a G protein-coupled receptor, on target cells to activate downstream signaling pathways. Follitropin is involved in follicle development and spermatogenesis in reproductive organs. The protein is Follitropin subunit beta (FSHB) of Sus scrofa (Pig).